The sequence spans 130 residues: UPF0713 protein YngL (130 aa).

Transmembrane regions (helical) follow at residues 4 to 25, 62 to 84, and 89 to 111; these read LSFL…LIVF, MLNC…YLFL, and IPLI…VGVG.

The protein belongs to the UPF0713 family.

It localises to the cell membrane. This is UPF0713 protein YngL (yngL) from Bacillus subtilis (strain 168).